We begin with the raw amino-acid sequence, 425 residues long: Imidazolonepropionase (425 aa).

Fe(3+)-binding residues include H78 and H80. Zn(2+)-binding residues include H78 and H80. The 4-imidazolone-5-propanoate site is built by R87, Y150, and H183. N-formimidoyl-L-glutamate is bound at residue Y150. H248 contributes to the Fe(3+) binding site. H248 contacts Zn(2+). Q251 serves as a coordination point for 4-imidazolone-5-propanoate. D323 lines the Fe(3+) pocket. Residue D323 coordinates Zn(2+). Positions 325 and 327 each coordinate N-formimidoyl-L-glutamate. T328 lines the 4-imidazolone-5-propanoate pocket.

This sequence belongs to the metallo-dependent hydrolases superfamily. HutI family. Zn(2+) is required as a cofactor. The cofactor is Fe(3+).

It localises to the cytoplasm. The catalysed reaction is 4-imidazolone-5-propanoate + H2O = N-formimidoyl-L-glutamate. Its pathway is amino-acid degradation; L-histidine degradation into L-glutamate; N-formimidoyl-L-glutamate from L-histidine: step 3/3. Functionally, catalyzes the hydrolytic cleavage of the carbon-nitrogen bond in imidazolone-5-propanoate to yield N-formimidoyl-L-glutamate. It is the third step in the universal histidine degradation pathway. The polypeptide is Imidazolonepropionase (Polaromonas sp. (strain JS666 / ATCC BAA-500)).